We begin with the raw amino-acid sequence, 241 residues long: Sugar fermentation stimulation protein homolog (241 aa).

This sequence belongs to the SfsA family.

The protein is Sugar fermentation stimulation protein homolog of Hahella chejuensis (strain KCTC 2396).